Here is a 434-residue protein sequence, read N- to C-terminus: Alpha-enolase (434 aa).

An N-acetylserine modification is found at Ser2. Position 5 is an N6-acetyllysine (Lys5). At Ser27 the chain carries Phosphoserine. Position 40 (Ser40) interacts with Mg(2+). The residue at position 44 (Tyr44) is a Phosphotyrosine. At Lys60 the chain carries N6-acetyllysine; alternate. Lys60 is modified (N6-succinyllysine; alternate). N6-acetyllysine occurs at positions 64 and 71. Residue Lys89 is modified to N6-acetyllysine; alternate. Position 89 is an N6-succinyllysine; alternate (Lys89). Residues Lys92 and Lys126 each carry the N6-acetyllysine modification. Residues His158 and Glu167 each coordinate substrate. An N6-acetyllysine mark is found at Lys193 and Lys199. Position 202 is an N6-acetyllysine; alternate (Lys202). Residue Lys202 forms a Glycyl lysine isopeptide (Lys-Gly) (interchain with G-Cter in SUMO2); alternate linkage. Glu210 serves as the catalytic Proton donor. Residues Lys228 and Lys233 each carry the N6-acetyllysine; alternate modification. Lys228 bears the N6-succinyllysine; alternate mark. Lys228 is modified (N6-(2-hydroxyisobutyryl)lysine; alternate). Lys233 is modified (N6-malonyllysine; alternate). Position 245 (Asp245) interacts with Mg(2+). Position 254 is a phosphoserine (Ser254). Lys256 is modified (N6-acetyllysine). Residues Ser263 and Ser272 each carry the phosphoserine modification. At Lys281 the chain carries N6-acetyllysine; alternate. Lys281 carries the post-translational modification N6-(2-hydroxyisobutyryl)lysine; alternate. The residue at position 285 (Lys285) is an N6-acetyllysine. Tyr287 carries the phosphotyrosine modification. Phosphoserine is present on Ser291. Glu293 and Asp318 together coordinate Mg(2+). The substrate site is built by Glu293 and Asp318. An N6-acetyllysine mark is found at Lys335 and Lys343. The active-site Proton acceptor is the Lys343. Substrate contacts are provided by residues 370–373 (SHRS) and Lys394. The segment at 405–434 (AKYNQLLRIEEELGSKAKFAGRNFRNPLAK) is required for interaction with PLG. Residue Lys406 is modified to N6-acetyllysine. An N6-acetyllysine; alternate modification is found at Lys420. At Lys420 the chain carries N6-succinyllysine; alternate. Lys420 is subject to N6-malonyllysine; alternate.

Belongs to the enolase family. In terms of assembly, mammalian enolase is composed of 3 isozyme subunits, alpha, beta and gamma, which can form homodimers or heterodimers which are cell-type and development-specific. ENO1 interacts with PLG in the neuronal plasma membrane and promotes its activation. The C-terminal lysine is required for this binding. Interacts with ENO4 and PGAM2. Interacts with CMTM6. The cofactor is Mg(2+). ISGylated. Post-translationally, lysine 2-hydroxyisobutyrylation (Khib) by p300/EP300 activates the phosphopyruvate hydratase activity.

The protein resides in the cytoplasm. It localises to the cell membrane. It catalyses the reaction (2R)-2-phosphoglycerate = phosphoenolpyruvate + H2O. It functions in the pathway carbohydrate degradation; glycolysis; pyruvate from D-glyceraldehyde 3-phosphate: step 4/5. Its function is as follows. Glycolytic enzyme the catalyzes the conversion of 2-phosphoglycerate to phosphoenolpyruvate. In addition to glycolysis, involved in various processes such as growth control, hypoxia tolerance and allergic responses. May also function in the intravascular and pericellular fibrinolytic system due to its ability to serve as a receptor and activator of plasminogen on the cell surface of several cell-types such as leukocytes and neurons. Stimulates immunoglobulin production. This Pongo abelii (Sumatran orangutan) protein is Alpha-enolase (ENO1).